The following is a 404-amino-acid chain: Cysteine desulfurase IscS (404 aa).

Residues 75–76 (AT), Asn155, Gln183, and 203–205 (SAH) each bind pyridoxal 5'-phosphate. At Lys206 the chain carries N6-(pyridoxal phosphate)lysine. Thr243 lines the pyridoxal 5'-phosphate pocket. The active-site Cysteine persulfide intermediate is the Cys328. [2Fe-2S] cluster is bound at residue Cys328.

It belongs to the class-V pyridoxal-phosphate-dependent aminotransferase family. NifS/IscS subfamily. Homodimer. Forms a heterotetramer with IscU, interacts with other sulfur acceptors. It depends on pyridoxal 5'-phosphate as a cofactor.

Its subcellular location is the cytoplasm. It catalyses the reaction (sulfur carrier)-H + L-cysteine = (sulfur carrier)-SH + L-alanine. Its pathway is cofactor biosynthesis; iron-sulfur cluster biosynthesis. Its function is as follows. Master enzyme that delivers sulfur to a number of partners involved in Fe-S cluster assembly, tRNA modification or cofactor biosynthesis. Catalyzes the removal of elemental sulfur atoms from cysteine to produce alanine. Functions as a sulfur delivery protein for Fe-S cluster synthesis onto IscU, an Fe-S scaffold assembly protein, as well as other S acceptor proteins. The chain is Cysteine desulfurase IscS from Tolumonas auensis (strain DSM 9187 / NBRC 110442 / TA 4).